Here is a 730-residue protein sequence, read N- to C-terminus: MARGKKMVDRVSELMSQPKFIRNIGIVAHIDHGKTTLSDNLLSGAGMISEELAGRQLFMDSDAEEQARGITIDASNVSMVHEYEGQEYLINMIDTPGHVDFGGDVTRAMRAVDGAVVVVDAVEGTMPQTETVLRQALKEQVVPVLFINKVDRLINELKVDEMEMQVRLAKVIDKVNKLIKGMNEDMYNNGWKLDAAKGTVAFGSALYNWAVSAPFMQKSGVSFKDVYNKCREGDMKSLAKSSPLHAVLLDMVVKHLPDPFDAQKRRINVIWHGDKESVEGKSMLTADPNGPIAMMVTDISFDPHAGEVATGRLFSGTLRRGTELYIIGSAMKANRVQQVGIFMGPTRVEVEELPAGNIAAVTGLKDAIVGSTVTNLREMVPFEALTHYSEPVMTVAVEAKNMKDLPKLVEVLRQVAKEDPTLVITINEETGEHLISGMGELHLEIITGRIKRDKGVEIVTSEPIVVYRETATRKAGPIEGKSPNRHNRFYVELEPLDQVIVDLIRNGEVSMNQTWIERRDILVANGWEKDEAKNIKDISTTNIFIDMTKGVQYLNETMELILEGLHEALQGGPLADEPVQNMKIRLVDVKLHEDAIHRGPAQVIPAVRSAVKAGILYAGDSLLEPIQKISITVPTDQMGNATSQIQGRRGSVLDITSEGDTITVVGRVPVAELFGFSGDIRSATEGRAMWNTEFAGFEIVPNSLVKDVVIAIRKRKGLKEQMPRPEDYLA.

The tr-type G domain maps to Lys-19 to Phe-260. GTP-binding positions include Ala-28–Thr-35, Asp-94–His-98, and Asn-148–Asp-151. Position 597 is a diphthamide (His-597).

This sequence belongs to the TRAFAC class translation factor GTPase superfamily. Classic translation factor GTPase family. EF-G/EF-2 subfamily.

Its subcellular location is the cytoplasm. Its function is as follows. Catalyzes the GTP-dependent ribosomal translocation step during translation elongation. During this step, the ribosome changes from the pre-translocational (PRE) to the post-translocational (POST) state as the newly formed A-site-bound peptidyl-tRNA and P-site-bound deacylated tRNA move to the P and E sites, respectively. Catalyzes the coordinated movement of the two tRNA molecules, the mRNA and conformational changes in the ribosome. The sequence is that of Elongation factor 2 from Methanosphaerula palustris (strain ATCC BAA-1556 / DSM 19958 / E1-9c).